The following is a 551-amino-acid chain: Eukaryotic translation initiation factor 3 subunit D-2 (551 aa).

The interval 105 to 152 (NNVRARGRTGRGSQAVGGPGGPAAGGSTANSTKYGKGRNTRNTQNVGR) is disordered. The segment covering 119 to 128 (AVGGPGGPAA) has biased composition (gly residues). The interval 290 to 304 (QFDLLTVNETSLEPP) is RNA gate.

The protein belongs to the eIF-3 subunit D family. As to quaternary structure, component of the eukaryotic translation initiation factor 3 (eIF-3) complex. The eIF-3 complex interacts with pix.

It localises to the cytoplasm. Functionally, mRNA cap-binding component of the eukaryotic translation initiation factor 3 (eIF-3) complex, which is involved in protein synthesis of a specialized repertoire of mRNAs and, together with other initiation factors, stimulates binding of mRNA and methionyl-tRNAi to the 40S ribosome. The eIF-3 complex specifically targets and initiates translation of a subset of mRNAs involved in cell proliferation. In the eIF-3 complex, eif3d specifically recognizes and binds the 7-methylguanosine cap of a subset of mRNAs. The protein is Eukaryotic translation initiation factor 3 subunit D-2 of Drosophila erecta (Fruit fly).